Consider the following 519-residue polypeptide: Sensor protein RprX (519 aa).

The next 2 helical transmembrane spans lie at 5–25 (TIWI…YLQV) and 260–280 (IPSM…IYIV). The 222-residue stretch at 296–517 (NMTHEFKTPI…KFIIALPLLK (222 aa)) folds into the Histidine kinase domain. Histidine 299 carries the phosphohistidine; by autocatalysis modification.

It localises to the cell membrane. It carries out the reaction ATP + protein L-histidine = ADP + protein N-phospho-L-histidine.. Member of the two-component regulatory system RprX/RprY. May activate RprY by phosphorylation. The sequence is that of Sensor protein RprX (rprX) from Bacteroides fragilis (strain YCH46).